The chain runs to 585 residues: ATP-dependent lipid A-core flippase (585 aa).

The next 6 membrane-spanning stretches (helical) occupy residues 23–43 (LAFG…AYVI), 64–84 (IAAY…FMGT), 140–160 (AFLT…WMFY), 163–183 (WQLS…VSVV), 247–267 (ILSV…VLYI), and 273–293 (FITD…TMLL). The 282-residue stretch at 27–308 (VAIIGMVGYS…LTTVNSEFQK (282 aa)) folds into the ABC transmembrane type-1 domain. In terms of domain architecture, ABC transporter spans 340 to 576 (LEFRDVTFHY…DGAYAQLHKL (237 aa)). 374 to 381 (GRSGSGKS) lines the ATP pocket.

This sequence belongs to the ABC transporter superfamily. Lipid exporter (TC 3.A.1.106) family. In terms of assembly, homodimer.

It localises to the cell inner membrane. The catalysed reaction is ATP + H2O + lipid A-core oligosaccharideSide 1 = ADP + phosphate + lipid A-core oligosaccharideSide 2.. Functionally, involved in lipopolysaccharide (LPS) biosynthesis. Translocates lipid A-core from the inner to the outer leaflet of the inner membrane. Transmembrane domains (TMD) form a pore in the inner membrane and the ATP-binding domain (NBD) is responsible for energy generation. The polypeptide is ATP-dependent lipid A-core flippase (Pseudoalteromonas atlantica (strain T6c / ATCC BAA-1087)).